The sequence spans 364 residues: Tyrosyl-DNA phosphodiesterase 2 (364 aa).

Met-1 is subject to N-acetylmethionine. Positions Met-1–Gly-10 are enriched in low complexity. A disordered region spans residues Met-1–Glu-21. A Glycyl lysine isopeptide (Lys-Gly) (interchain with G-Cter in SUMO2) cross-link involves residue Lys-23. The tract at residues Glu-68–Val-108 is disordered. Thr-88 and Thr-92 each carry phosphothreonine; by ACVR1B. Ser-95 is subject to Phosphoserine. An interaction with 5' end of substrate DNA region spans residues Asn-122–Leu-126. Positions 124 and 154 each coordinate Mg(2+). The interval His-228 to Arg-233 is interaction with 5' end of substrate DNA. The active-site Proton donor/acceptor is the Asp-264. The tract at residues Asn-266–Arg-268 is interaction with 5' end of substrate DNA.

The protein belongs to the CCR4/nocturin family. In terms of assembly, interacts with TRAF2, TRAF3, TRAF5, TRAF6, TNFRSF8/CD30, TNFRSF5/CD40, TNFRSF1B/TNF-R75, ETS1, ETS2, FLI1, SMAD3 and ACVR1B/ALK4. It depends on Mg(2+) as a cofactor. Requires Mn(2+) as cofactor. Ubiquitinated by TRAF6.

Its subcellular location is the nucleus. It is found in the PML body. The protein resides in the nucleolus. It localises to the cytoplasm. In terms of biological role, DNA repair enzyme that can remove a variety of covalent adducts from DNA through hydrolysis of a 5'-phosphodiester bond, giving rise to DNA with a free 5' phosphate. Catalyzes the hydrolysis of dead-end complexes between DNA and the topoisomerase 2 (TOP2) active site tyrosine residue. The 5'-tyrosyl DNA phosphodiesterase activity can enable the repair of TOP2-induced DNA double-strand breaks/DSBs without the need for nuclease activity, creating a 'clean' DSB with 5'-phosphate termini that are ready for ligation. Thereby, protects the transcription of many genes involved in neurological development and maintenance from the abortive activity of TOP2. Hydrolyzes 5'-phosphoglycolates on protruding 5' ends on DSBs due to DNA damage by radiation and free radicals. Has preference for single-stranded DNA or duplex DNA with a 4 base pair overhang as substrate. Also has 3'-tyrosyl DNA phosphodiesterase activity, but less efficiently and much slower than TDP1. Constitutes the major if not only 5'-tyrosyl-DNA phosphodiesterase in cells. Also acts as an adapter by participating in the specific activation of MAP3K7/TAK1 in response to TGF-beta: associates with components of the TGF-beta receptor-TRAF6-TAK1 signaling module and promotes their ubiquitination dependent complex formation. Involved in non-canonical TGF-beta induced signaling routes. May also act as a negative regulator of ETS1 and may inhibit NF-kappa-B activation. Acts as a regulator of ribosome biogenesis following stress. This Bos taurus (Bovine) protein is Tyrosyl-DNA phosphodiesterase 2 (TDP2).